Reading from the N-terminus, the 122-residue chain is Large ribosomal subunit protein uL14c (122 aa).

It belongs to the universal ribosomal protein uL14 family. In terms of assembly, part of the 50S ribosomal subunit.

It localises to the plastid. Its subcellular location is the chloroplast. Its function is as follows. Binds to 23S rRNA. This chain is Large ribosomal subunit protein uL14c, found in Stigeoclonium helveticum (Green alga).